The chain runs to 291 residues: MSLITFKAGKLRRVPGTKLLRADPEKGYIVMNRDAYGLIHFQWAKRNDLENPEDDIIVFSSECTFEKVTECTTGRAYMLKYPSSAHSLFYWMQEASDDNDTSYAERINSYIKDQDLLDPARSDVATVSDMMEVDTVEQSEPIAQPTESSKESSEIGAPNSDEINSSEAVRNLLATISAQAGFGGSTVDLCEILKPSNLTDLLCQEGVIDRLMPYMPPDTPNNLEGVLAIVSSPQYAQALRSFSQALNSPGGVNIISALGLSLDESANPNEGGALQFLKAIARFVSRNNGSE.

Positions 1–114 constitute a Pru domain; the sequence is MSLITFKAGK…ERINSYIKDQ (114 aa). The segment at 135–162 is disordered; sequence TVEQSEPIAQPTESSKESSEIGAPNSDE. Residues 178–290 form the DEUBAD domain; it reads AQAGFGGSTV…ARFVSRNNGS (113 aa).

The protein belongs to the ADRM1 family. As to quaternary structure, component of the 19S proteasome regulatory particle complex. The 2 S.pombe rpn13 homologs, rpn1301 and rpn1302 are present at a 0.2-1 ratio.

The protein localises to the cytoplasm. Its subcellular location is the nucleus. In terms of biological role, component of the 26S proteasome, a multiprotein complex involved in the ATP-dependent degradation of ubiquitinated proteins. This complex plays a key role in the maintenance of protein homeostasis by removing misfolded or damaged proteins, which could impair cellular functions, and by removing proteins whose functions are no longer required. Therefore, the proteasome participates in numerous cellular processes, including cell cycle progression, apoptosis, or DNA damage repair. Within the complex, functions as a proteasomal ubiquitin receptor. The sequence is that of Proteasomal ubiquitin receptor ADRM1 homolog rpn1301 (rpn1301) from Schizosaccharomyces pombe (strain 972 / ATCC 24843) (Fission yeast).